The chain runs to 194 residues: Mitochondrial inner membrane protease ATP23 (194 aa).

The interval 1–20 (MEDAAAPNSGSEFNPGARRG) is disordered. His96 contributes to the Zn(2+) binding site. Glu97 is a catalytic residue. His100 provides a ligand contact to Zn(2+).

Belongs to the peptidase M76 family.

It is found in the mitochondrion inner membrane. Functionally, has a dual role in the assembly of mitochondrial ATPase. Acts as a protease that removes the N-terminal 10 residues of mitochondrial ATPase CF(0) subunit 6 (ATP6) at the intermembrane space side. Also involved in the correct assembly of the membrane-embedded ATPase CF(0) particle, probably mediating association of ATP6 with the subunit 9 ring. This is Mitochondrial inner membrane protease ATP23 from Arabidopsis thaliana (Mouse-ear cress).